The chain runs to 473 residues: Major myo-inositol transporter IolT (473 aa).

A run of 12 helical transmembrane segments spans residues 14-34 (IILV…VLNG), 49-69 (AFTE…GAVF), 83-103 (ILFL…APNV), 111-131 (FVLG…LAEM), 146-166 (LMIV…GTTM), 172-192 (VWRF…FGMI), 256-276 (IVFI…NSIM), 295-315 (IGNI…IWLL), 325-345 (MTGL…SLVL), 350-370 (ALPY…QGAI), 389-409 (LGMG…SFTF), and 411-431 (ILLA…LGIC).

Belongs to the major facilitator superfamily. Sugar transporter (TC 2.A.1.1) family.

It is found in the cell membrane. The protein operates within polyol metabolism; myo-inositol degradation into acetyl-CoA. Its function is as follows. Major myo-inositol uptake transporter. This Bacillus subtilis (strain 168) protein is Major myo-inositol transporter IolT (iolT).